A 102-amino-acid chain; its full sequence is UPF0122 protein MPN_424 (102 aa).

It belongs to the UPF0122 family.

In terms of biological role, might take part in the signal recognition particle (SRP) pathway. This is inferred from the conservation of its genetic proximity to ftsY/ffh. May be a regulatory protein. This is UPF0122 protein MPN_424 from Mycoplasma pneumoniae (strain ATCC 29342 / M129 / Subtype 1) (Mycoplasmoides pneumoniae).